We begin with the raw amino-acid sequence, 375 residues long: Beta-1,3-N-acetylglucosaminyltransferase lunatic fringe (375 aa).

Residues 1 to 8 (MLKNWGKK) are Cytoplasmic-facing. Residues 9–29 (LLLSIVGATLTCLLVLVVDQQ) form a helical; Signal-anchor for type II membrane protein membrane-spanning segment. Residues 30–375 (SRHMLETQSD…TPWCPWKAAY (346 aa)) lie on the Lumenal side of the membrane. The disordered stretch occupies residues 53-73 (DLDPANPGDGGDPANSAQDSG). Arg-125 contacts substrate. A glycan (N-linked (GlcNAc...) asparagine) is linked at Asn-163. Intrachain disulfides connect Cys-164-Cys-175 and Cys-193-Cys-256. Asp-197 lines the substrate pocket. Asp-198 is a binding site for Mn(2+). Asp-286 is a catalytic residue. His-310 is a binding site for Mn(2+). Cysteines 360 and 369 form a disulfide.

It belongs to the glycosyltransferase 31 family. Mn(2+) serves as cofactor. It depends on Co(2+) as a cofactor. A soluble form may be derived from the membrane form by proteolytic processing. Detected in the neural tube, the eye and the otic vesicle, expression coincides with the region that produces the medial, intermediate and lateral neurons.

The protein resides in the golgi apparatus membrane. The enzyme catalyses 3-O-(alpha-L-fucosyl)-L-threonyl-[EGF-like domain protein] + UDP-N-acetyl-alpha-D-glucosamine = 3-O-(N-acetyl-beta-D-glucosaminyl-(1-&gt;3)-alpha-L-fucosyl)-L-threonyl-[EGF-like domain protein] + UDP + H(+). It catalyses the reaction 3-O-(alpha-L-fucosyl)-L-seryl-[EGF-like domain protein] + UDP-N-acetyl-alpha-D-glucosamine = 3-O-(N-acetyl-beta-D-glucosaminyl-(1-&gt;3)-alpha-L-fucosyl)-L-seryl-[EGF-like domain protein] + UDP + H(+). Functionally, glycosyltransferase that initiates the elongation of O-linked fucose residues attached to EGF-like repeats in the extracellular domain of Notch molecules. Essential mediator of somite segmentation and patterning. May be involved in mesoderm development. The polypeptide is Beta-1,3-N-acetylglucosaminyltransferase lunatic fringe (lfng) (Xenopus laevis (African clawed frog)).